The primary structure comprises 642 residues: MSSTSTSNTAGITYPKAYDVVVIGGGHAGTEAALAAARMGAQTLLLTHNIETLGQMSCNPAIGGIGKSHLVREIDALGGAMALATDKAGIQFRVLNSRKGAAVRATRAQADRILYKAAIRHTLENQPNLDLFQQGADDILVENGKACAVVTATGIIFRTKTVVLTSGTFLGGVIHIGLDNSKGGRAGDQPSIKLAERLRELKLPVGRLKTGTPARIDARTVDFSVMQTQPGDTPLPVMSFMGNVDMHPEQVNCFITHTNEKTHDIIRKHLDRSPLFSGTIEGVGPRYCPSIEDKIHRFADKNSHQIFIEPEGLTTHELYPNGISTSLPFDVQLEFIRTMAGLENAHITRPGYAIEYDYFNPQNLKPTLETKSIDSLYFAGQINGTTGYEEAGVQGLLAGVNAALSTQDNPVMDSWTPRRDQAYLGVLVDDLITHGTKEPYRMFTSRAEYRLLLREDNADQRLTEIGRKLGLVDDTRWQAYQQKMESMATESARLKDLWATPHNELGKKFTEQTGEVLSKEATAYDLLKRPNVGFNDIAAVTGAQVAADVGEQIEISVKYAGYIDRQQEDIDQMKRLENTQLPADFDYKAVSGLSNEIVQKLNDIRPATLAQASRISGVTPAAIQLLGMTLKKQKKAKAALDI.

24–29 (GGGHAG) lines the FAD pocket. Residue 284–298 (GPRYCPSIEDKIHRF) coordinates NAD(+).

It belongs to the MnmG family. As to quaternary structure, homodimer. Heterotetramer of two MnmE and two MnmG subunits. The cofactor is FAD.

Its subcellular location is the cytoplasm. Its function is as follows. NAD-binding protein involved in the addition of a carboxymethylaminomethyl (cmnm) group at the wobble position (U34) of certain tRNAs, forming tRNA-cmnm(5)s(2)U34. The protein is tRNA uridine 5-carboxymethylaminomethyl modification enzyme MnmG of Psychrobacter sp. (strain PRwf-1).